Here is a 282-residue protein sequence, read N- to C-terminus: Bifunctional protein FolD (282 aa).

NADP(+) is bound by residues 165–167 (NRS), serine 190, and isoleucine 231.

It belongs to the tetrahydrofolate dehydrogenase/cyclohydrolase family. In terms of assembly, homodimer.

It catalyses the reaction (6R)-5,10-methylene-5,6,7,8-tetrahydrofolate + NADP(+) = (6R)-5,10-methenyltetrahydrofolate + NADPH. The enzyme catalyses (6R)-5,10-methenyltetrahydrofolate + H2O = (6R)-10-formyltetrahydrofolate + H(+). It functions in the pathway one-carbon metabolism; tetrahydrofolate interconversion. Its function is as follows. Catalyzes the oxidation of 5,10-methylenetetrahydrofolate to 5,10-methenyltetrahydrofolate and then the hydrolysis of 5,10-methenyltetrahydrofolate to 10-formyltetrahydrofolate. The sequence is that of Bifunctional protein FolD from Clostridium botulinum (strain Okra / Type B1).